The primary structure comprises 240 residues: Myomodulin neuropeptides 2 (240 aa).

An N-terminal signal peptide occupies residues 1–23; that stretch reads MWKILETCSCFLVVAVLSGLGKA. The interval 23–44 is disordered; sequence AQPESFSGSAVTDDSTSGANKR. A propeptide spanning residues 24-44 is cleaved from the precursor; it reads QPESFSGSAVTDDSTSGANKR. Positions 26 to 41 are enriched in polar residues; it reads ESFSGSAVTDDSTSGA. Leucine amide is present on residues Leu51 and Leu60. 2 consecutive propeptides (connecting peptide) follow at residues 72-81 and 84-112; these read SGHQVPMLRA and GSPD…RDQS. Alanine amide is present on Ala81. Residue Gln115 is modified to Pyrrolidone carboxylic acid. Tyr121 is subject to Tyrosine amide. 10 propeptides (connecting peptide) span residues 124–147, 124–148, 124–149, 124–168, 131–168, 149–168, 150–168, 151–168, 171–190, and 171–199; these read DNNG…SNFD, DNNG…NFDL, DNNG…FDLL, DNNG…GGRY, DLLD…GGRY, LSSL…GGRY, SSLN…GGRY, SLNN…GGRY, SLPD…LVQS, and SLPD…PYSS. Ile207 carries the isoleucine amide modification. The propeptide occupies 210–219; it reads FSGSPRLQAK. The tract at residues 212 to 240 is disordered; it reads GSPRLQAKAVPRPRIGRQESQMREAKSAE. Position 226 is an isoleucine amide (Ile226). Residues 227-240 constitute a propeptide that is removed on maturation; it reads GRQESQMREAKSAE. A compositionally biased stretch (basic and acidic residues) spans 227–240; it reads GRQESQMREAKSAE.

In terms of tissue distribution, expressed in the pedal-buccal projection neurons in the pedal ganglion.

Its subcellular location is the secreted. MMG2-DPs (Myomodulin gene 2-derived peptides) bias egestive feeding programs toward ingestive ones, and modulate accessory radula closer (ARC) muscle contractions. The protein is Myomodulin neuropeptides 2 (MMG2) of Aplysia californica (California sea hare).